A 570-amino-acid chain; its full sequence is Hydroxylamine reductase (570 aa).

Residues Cys5, Cys8, Cys17, and Cys23 each contribute to the [4Fe-4S] cluster site. Positions 266, 290, 334, 425, 453, 478, 513, and 515 each coordinate hybrid [4Fe-2O-2S] cluster. Position 425 is a cysteine persulfide (Cys425).

This sequence belongs to the HCP family. [4Fe-4S] cluster is required as a cofactor. Hybrid [4Fe-2O-2S] cluster serves as cofactor.

The protein localises to the cytoplasm. The catalysed reaction is A + NH4(+) + H2O = hydroxylamine + AH2 + H(+). In terms of biological role, catalyzes the reduction of hydroxylamine to form NH(3) and H(2)O. This is Hydroxylamine reductase from Clostridium botulinum (strain Loch Maree / Type A3).